A 777-amino-acid polypeptide reads, in one-letter code: MRLKISLLKEPKHQELVSCVGWTTAEELYSCSDDHQIVKWNLLTSETSLIVKLPDDIYPIDLHWFPKSLGIKKQTQAESFVLTSSDGKFHLISKLGRVEKSVEAHCGAVLAGRWNYEGTALVTVGEDGQVKIWSKTGMLRSTLAQQGIPVYSVAWGPDSEKVLYTAGKQLIIKPLQPNAKVLQWKAHDGIILKVDWNSVNDLILSAGEDCKYKVWDSYGRVLYGSQPHEHPITSVAWAPDGELFAVGSFHTLRLCDKTGWSYALEKPNTGSIFNIAWSIDGTQIAGACGNGHVVFAHVVEQRWEWKNFQVTLTKRRTMQVRNVLNDAVDLLEFRDRVIKASLNHAHLVVSTSLQCYVFSTKNWNTPLIFDLKEGTVSLILQAERHFLLVDGGGIYLHSYEGRFISSPKFPGMRTDILNAQTVSLSNDTIAIKDKADEKIIFLFEASTGKPLGDGKLLSHKNEISEVALDQKGLTNDRKIAFIDKNRDLYITSVKRFGKEEQIIKLGTMVHTLAWCDTCNILCGLQDTRFTVWYYPNAVYVDRDILPKTLYERDASEYSKNPHIVSFVGNQVTVRRADGSLVHISISPYPAILHEYVSSSKWEDAVRLCRFVKEQSLWACLAAMAVANRDMVTAEIAYAAVGEIDKVRYINAMKDLPSRESKMAHILMFSGNIQEAETILLQAGLVYQAIQININLYNWERALELAVKYKTHVDTVLAYRQKFLETFGKQETNKRYLQYAEGLQIDWEKIKAKIEMEITKERDRSSSGQSSKNTGLKP.

WD repeat units lie at residues 12–50 (KHQE…TSLI), 104–143 (AHCG…RSTL), 145–185 (QQGI…LQWK), 186–225 (AHDG…LYGS), 227–265 (PHEH…YALE), 267–306 (PNTG…WEWK), and 504–542 (KLGT…YVDR). The segment at 758–777 (TKERDRSSSGQSSKNTGLKP) is disordered. Polar residues predominate over residues 765–777 (SSGQSSKNTGLKP).

As to quaternary structure, component of the IFT complex B, at least composed of IFT20, IFT22, IFT25, IFT27, IFT46, IFT52, TRAF3IP1/IFT54, IFT57, IFT74, IFT80, IFT81, and IFT88. Interacts with IFT88. Interacts with IFT57 and IFT70B.

Its subcellular location is the cytoplasm. It localises to the cytoskeleton. The protein resides in the cilium basal body. It is found in the cilium axoneme. Functionally, component of the intraflagellar transport (IFT) complex B, which is essential for the development and maintenance of motile and sensory cilia. The chain is Intraflagellar transport protein 80 homolog (Ift80) from Rattus norvegicus (Rat).